Consider the following 461-residue polypeptide: ATP synthase subunit beta (461 aa).

Residue 151–158 (GGAGVGKT) coordinates ATP.

Belongs to the ATPase alpha/beta chains family. F-type ATPases have 2 components, CF(1) - the catalytic core - and CF(0) - the membrane proton channel. CF(1) has five subunits: alpha(3), beta(3), gamma(1), delta(1), epsilon(1). CF(0) has three main subunits: a(1), b(2) and c(9-12). The alpha and beta chains form an alternating ring which encloses part of the gamma chain. CF(1) is attached to CF(0) by a central stalk formed by the gamma and epsilon chains, while a peripheral stalk is formed by the delta and b chains.

It localises to the cell inner membrane. It carries out the reaction ATP + H2O + 4 H(+)(in) = ADP + phosphate + 5 H(+)(out). Produces ATP from ADP in the presence of a proton gradient across the membrane. The catalytic sites are hosted primarily by the beta subunits. The polypeptide is ATP synthase subunit beta (Coxiella burnetii (strain Dugway 5J108-111)).